The primary structure comprises 1209 residues: 3',5'-cyclic-AMP phosphodiesterase, isoform I (1209 aa).

7 disordered regions span residues 16–35 (NVAK…GSGT), 59–82 (GGGS…KRKS), 275–353 (LYSG…PLPP), 372–403 (SATS…SPRI), 442–498 (ETLA…MQAE), 626–655 (VPAS…LSQG), and 754–792 (SAGQ…RLPT). Gly residues-rich tracts occupy residues 25-35 (SSNGTGNGSGT) and 59-77 (GGGS…GSGS). The span at 275 to 290 (LYSGSNPSTNPCQSAV) shows a compositional bias: polar residues. The span at 291–314 (QNQGQNSNPNPNQNPNTNPNQNQQ) shows a compositional bias: low complexity. Polar residues predominate over residues 315–324 (RCSCQPQTSP). Over residues 372–383 (SATSSSAGTVPP) the composition is skewed to low complexity. Residues 385–400 (GQQTQEYIAGTSSTPS) show a composition bias toward polar residues. Composition is skewed to low complexity over residues 445-462 (ASSS…NSSS) and 472-483 (TSSSASALATSH). 2 stretches are compositionally biased toward polar residues: residues 484-498 (PSNS…MQAE) and 627-645 (PASN…SRSG). The PDEase domain maps to 795–1124 (VETPRENELG…DYYQSMIPPS (330 aa)). The active-site Proton donor is histidine 871. 871 to 875 (HNSLH) serves as a coordination point for 3',5'-cyclic AMP. Positions 875, 911, 912, and 1029 each coordinate a divalent metal cation. Aspartate 912, aspartate 1029, and glutamine 1080 together coordinate 3',5'-cyclic AMP. Positions 1146-1163 (EESDQENLAELEEGDESG) are enriched in acidic residues. The disordered stretch occupies residues 1146–1209 (EESDQENLAE…CQNQPQHGGM (64 aa)). Residues 1164–1181 (GESTTTGTTGTTAASALS) show a composition bias toward low complexity. A compositionally biased stretch (gly residues) spans 1182–1193 (GAGGGGGGGGGM). The span at 1199–1209 (GCQNQPQHGGM) shows a compositional bias: polar residues.

It belongs to the cyclic nucleotide phosphodiesterase family. PDE4 subfamily. Monomer. A divalent metal cation serves as cofactor.

It carries out the reaction 3',5'-cyclic AMP + H2O = AMP + H(+). It functions in the pathway purine metabolism; 3',5'-cyclic AMP degradation; AMP from 3',5'-cyclic AMP: step 1/1. Functionally, hydrolyzes the second messenger cAMP, which is a key regulator of many important physiological processes. Vital for female fertility. Required for learning/memory. The chain is 3',5'-cyclic-AMP phosphodiesterase, isoform I from Drosophila melanogaster (Fruit fly).